Reading from the N-terminus, the 277-residue chain is MKKTQQKEIENVTNITGVRQIELWRHDDLQHPRLDEVAEEVPVALVYNGISHVVMMASPKDLEYFALGFSLSEGIIESPRDIFGMDVVPSCNGLEVQIELSSRRFMGLKERRRALAGRTGCGVCGVEQLNDIGKPVQPLPFTQTFDLNKLDDALRHLNDFQPVGQLTGCTHAAAWMLPSGELVGGHEDVGRHVALDKLLGRRSQEGESWQQGAVLVSSRASYEMVQKSAMCGVEILFAVSAATTLAVEVAERCNLTLVGFCKPGRATVYTHPQRLSN.

Cys-121 serves as the catalytic Cysteine persulfide intermediate. A Mo-bis(molybdopterin guanine dinucleotide)-binding site is contributed by 260–265 (FCKPGR).

The protein belongs to the FdhD family.

The protein resides in the cytoplasm. Its function is as follows. Required for formate dehydrogenase (FDH) activity. Acts as a sulfur carrier protein that transfers sulfur from IscS to the molybdenum cofactor prior to its insertion into FDH. The polypeptide is Sulfur carrier protein FdhD (Escherichia coli O6:K15:H31 (strain 536 / UPEC)).